The chain runs to 252 residues: Hydroxyacylglutathione hydrolase (252 aa).

Residues histidine 54, histidine 56, aspartate 58, histidine 59, histidine 111, aspartate 128, and histidine 166 each contribute to the Zn(2+) site.

It belongs to the metallo-beta-lactamase superfamily. Glyoxalase II family. Monomer. Zn(2+) serves as cofactor.

The enzyme catalyses an S-(2-hydroxyacyl)glutathione + H2O = a 2-hydroxy carboxylate + glutathione + H(+). It participates in secondary metabolite metabolism; methylglyoxal degradation; (R)-lactate from methylglyoxal: step 2/2. Thiolesterase that catalyzes the hydrolysis of S-D-lactoyl-glutathione to form glutathione and D-lactic acid. This Photobacterium profundum (strain SS9) protein is Hydroxyacylglutathione hydrolase.